The sequence spans 853 residues: Aryl hydrocarbon receptor (853 aa).

A propeptide spanning residues 1–9 (MSSGANITY) is cleaved from the precursor. The tract at residues 1 to 38 (MSSGANITYASRKRRKPVQKTVKPVPAEGIKSNPSKRH) is disordered. Short sequence motifs (nuclear localization signal) lie at residues 12 to 15 (RKRR) and 36 to 41 (KRHRDR). Residues 26 to 79 (PAEGIKSNPSKRHRDRLNTELDRLASLLPFPQDVINKLDKLSVLRLSVSYLRAK) form the bHLH domain. The DNA-binding stretch occupies residues 37–65 (RHRDRLNTELDRLASLLPFPQDVINKLDK). 3 required for maintaining the overall integrity of the AHR:ARNT heterodimer and its transcriptional activity regions span residues 49 to 81 (LASL…AKSF), 116 to 124 (LLQALNGFV), and 264 to 266 (FAI). A Nuclear export signal motif is present at residues 63–71 (LDKLSVLRL). Residues 116 to 179 (LLQALNGFVL…RQLHWALNPS (64 aa)) enclose the PAS 1 domain. The 68-residue stretch at 273–340 (PSILEIRTKN…CAESHIRMIK (68 aa)) folds into the PAS 2 domain. A PAC domain is found at 346–384 (MTVFRLLAKHSRWRWVQSNARLIYRNGRPDYIIATQRPL). A disordered region spans residues 429–451 (TKSNTSRKDWAPQSTPSKDSFHP). The span at 440–451 (PQSTPSKDSFHP) shows a compositional bias: polar residues.

Homodimer. Heterodimer; efficient DNA binding requires dimerization with another bHLH protein. Interacts with ARNT; the heterodimer ARNT:AHR binds to core DNA sequence 5'-TGCGTG-3' within the dioxin response element (DRE) of target gene promoters and activates their transcription. Binds MYBBP1A. Interacts with coactivators including SRC-1, RIP140 and NOCA7, and with the corepressor SMRT. Interacts with NEDD8 and IVNS1ABP. Interacts with BMAL1. Interacts with HSP90AB1. Interacts with TIPARP; leading to mono-ADP-ribosylation of AHR and subsequent inhibition of AHR. Post-translationally, mono-ADP-ribosylated, leading to inhibit transcription activator activity of AHR. Expressed in all tissues tested including brain, heart, kidney, liver, lung, spleen, skeletal muscle and thymus.

Its subcellular location is the cytoplasm. It localises to the nucleus. Ligand-activated transcription factor that enables cells to adapt to changing conditions by sensing compounds from the environment, diet, microbiome and cellular metabolism, and which plays important roles in development, immunity and cancer. Upon ligand binding, translocates into the nucleus, where it heterodimerizes with ARNT and induces transcription by binding to xenobiotic response elements (XRE). Regulates a variety of biological processes, including angiogenesis, hematopoiesis, drug and lipid metabolism, cell motility and immune modulation. Xenobiotics can act as ligands: upon xenobiotic-binding, activates the expression of multiple phase I and II xenobiotic chemical metabolizing enzyme genes (such as the CYP1A1 gene). Mediates biochemical and toxic effects of halogenated aromatic hydrocarbons. Next to xenobiotics, natural ligands derived from plants, microbiota, and endogenous metabolism are potent AHR agonists. Tryptophan (Trp) derivatives constitute an important class of endogenous AHR ligands. Acts as a negative regulator of anti-tumor immunity: indoles and kynurenic acid generated by Trp catabolism act as ligand and activate AHR, thereby promoting AHR-driven cancer cell motility and suppressing adaptive immunity. Regulates the circadian clock by inhibiting the basal and circadian expression of the core circadian component PER1. Inhibits PER1 by repressing the CLOCK-BMAL1 heterodimer mediated transcriptional activation of PER1. The heterodimer ARNT:AHR binds to core DNA sequence 5'-TGCGTG-3' within the dioxin response element (DRE) of target gene promoters and activates their transcription. The polypeptide is Aryl hydrocarbon receptor (Ahr) (Rattus norvegicus (Rat)).